Consider the following 21-residue polypeptide: Hydroxypicolinic acid-activating enzyme (21 aa).

In terms of biological role, involved in etamycin biosynthesis. The chain is Hydroxypicolinic acid-activating enzyme from Streptomyces griseoviridis.